Here is a 218-residue protein sequence, read N- to C-terminus: MGQKVNPHGLRVGVIKDWDSKWYAEGDFADYLVEDYNIRTFLKKKLYAAGVSKIEIERASDRVKVIIYTAKPGVVIGKGGAEIEKIKAEVQKLTDKKLVVDIKEVKRPDKDAQLVAENIALQLENRVSFRRAMKSCMGRAMKAGVKGIKTTCSGRLGGADMARTETYNDGTTPLQTIRADIDYGFAEADTTYGKVGVKVWIYKGEVLPTKANKEGGAK.

Residues 38–106 (IRTFLKKKLY…KLVVDIKEVK (69 aa)) form the KH type-2 domain.

Belongs to the universal ribosomal protein uS3 family. Part of the 30S ribosomal subunit. Forms a tight complex with proteins S10 and S14.

In terms of biological role, binds the lower part of the 30S subunit head. Binds mRNA in the 70S ribosome, positioning it for translation. This chain is Small ribosomal subunit protein uS3, found in Agathobacter rectalis (strain ATCC 33656 / DSM 3377 / JCM 17463 / KCTC 5835 / VPI 0990) (Eubacterium rectale).